A 458-amino-acid polypeptide reads, in one-letter code: MSSGRIVQIIGAVIDVEFPRDAVPSIYEALKVQGVETTLEVQQQLGDGVVRSIAMGSTEGLKRGLNVDSTGAAISVPVGKATLGRIMDVLGNPIDEAGPIGEEERWGIHREAPSYADQAGGNELLETGIKVIDLVCPFAKGGKVGLFGGAGVGKTVNMMELIRNIAIEHSGYSVFAGVGERTREGNDFYHEMKDSNVLDKVALVYGQMNEPPGNRLRVALTGLTMAEKFRDEGRDVLLFIDNIYRYTLAGTEVSALLGRMPSAVGYQPTLAEEMGVLQERITSTKKGSITSIQAVYVPADDLTDPSPATTFAHLDATVVLSRDIASLGIYPAVDPLDSTSRQLDPLVIGQDHYDTARGVQYVLQRYKELKDIIAILGMDELSEADKLLVARARKIQRFLSQPFFVAEVFTGSPGKYVSLKDTIAGFKGILNGDYDHLPEQAFYMVGGIEEAVEKAKKL.

148–155 (GGAGVGKT) is a binding site for ATP.

It belongs to the ATPase alpha/beta chains family. F-type ATPases have 2 components, CF(1) - the catalytic core - and CF(0) - the membrane proton channel. CF(1) has five subunits: alpha(3), beta(3), gamma(1), delta(1), epsilon(1). CF(0) has three main subunits: a(1), b(2) and c(9-12). The alpha and beta chains form an alternating ring which encloses part of the gamma chain. CF(1) is attached to CF(0) by a central stalk formed by the gamma and epsilon chains, while a peripheral stalk is formed by the delta and b chains.

Its subcellular location is the cell inner membrane. It carries out the reaction ATP + H2O + 4 H(+)(in) = ADP + phosphate + 5 H(+)(out). In terms of biological role, produces ATP from ADP in the presence of a proton gradient across the membrane. The catalytic sites are hosted primarily by the beta subunits. The polypeptide is ATP synthase subunit beta (Pseudomonas aeruginosa (strain LESB58)).